Reading from the N-terminus, the 340-residue chain is 4-hydroxythreonine-4-phosphate dehydrogenase (340 aa).

Residues His141 and Thr142 each coordinate substrate. His171, His216, and His271 together coordinate a divalent metal cation. The substrate site is built by Lys279, Asn288, and Arg297.

This sequence belongs to the PdxA family. Homodimer. The cofactor is Zn(2+). It depends on Mg(2+) as a cofactor. Requires Co(2+) as cofactor.

The protein localises to the cytoplasm. The catalysed reaction is 4-(phosphooxy)-L-threonine + NAD(+) = 3-amino-2-oxopropyl phosphate + CO2 + NADH. Its pathway is cofactor biosynthesis; pyridoxine 5'-phosphate biosynthesis; pyridoxine 5'-phosphate from D-erythrose 4-phosphate: step 4/5. Catalyzes the NAD(P)-dependent oxidation of 4-(phosphooxy)-L-threonine (HTP) into 2-amino-3-oxo-4-(phosphooxy)butyric acid which spontaneously decarboxylates to form 3-amino-2-oxopropyl phosphate (AHAP). The chain is 4-hydroxythreonine-4-phosphate dehydrogenase from Desulforapulum autotrophicum (strain ATCC 43914 / DSM 3382 / VKM B-1955 / HRM2) (Desulfobacterium autotrophicum).